Reading from the N-terminus, the 494-residue chain is Cobyric acid synthase (494 aa).

Residues 248–444 (EIEIAIIKLP…LHGIFENDEW (197 aa)) form the GATase cobBQ-type domain. The active-site Nucleophile is cysteine 329. Histidine 436 is an active-site residue.

The protein belongs to the CobB/CobQ family. CobQ subfamily.

It participates in cofactor biosynthesis; adenosylcobalamin biosynthesis. Catalyzes amidations at positions B, D, E, and G on adenosylcobyrinic A,C-diamide. NH(2) groups are provided by glutamine, and one molecule of ATP is hydrogenolyzed for each amidation. This Prochlorococcus marinus (strain NATL1A) protein is Cobyric acid synthase.